The chain runs to 211 residues: Thiamine-phosphate synthase (211 aa).

Residues 39–41 (QLR) and asparagine 71 contribute to the 4-amino-2-methyl-5-(diphosphooxymethyl)pyrimidine site. Mg(2+)-binding residues include aspartate 72 and aspartate 91. Position 110 (serine 110) interacts with 4-amino-2-methyl-5-(diphosphooxymethyl)pyrimidine. A 2-[(2R,5Z)-2-carboxy-4-methylthiazol-5(2H)-ylidene]ethyl phosphate-binding site is contributed by 136 to 138 (TGT). Residue lysine 139 participates in 4-amino-2-methyl-5-(diphosphooxymethyl)pyrimidine binding. Residues glycine 167 and 187–188 (VS) each bind 2-[(2R,5Z)-2-carboxy-4-methylthiazol-5(2H)-ylidene]ethyl phosphate.

The protein belongs to the thiamine-phosphate synthase family. Requires Mg(2+) as cofactor.

The enzyme catalyses 2-[(2R,5Z)-2-carboxy-4-methylthiazol-5(2H)-ylidene]ethyl phosphate + 4-amino-2-methyl-5-(diphosphooxymethyl)pyrimidine + 2 H(+) = thiamine phosphate + CO2 + diphosphate. It carries out the reaction 2-(2-carboxy-4-methylthiazol-5-yl)ethyl phosphate + 4-amino-2-methyl-5-(diphosphooxymethyl)pyrimidine + 2 H(+) = thiamine phosphate + CO2 + diphosphate. The catalysed reaction is 4-methyl-5-(2-phosphooxyethyl)-thiazole + 4-amino-2-methyl-5-(diphosphooxymethyl)pyrimidine + H(+) = thiamine phosphate + diphosphate. The protein operates within cofactor biosynthesis; thiamine diphosphate biosynthesis; thiamine phosphate from 4-amino-2-methyl-5-diphosphomethylpyrimidine and 4-methyl-5-(2-phosphoethyl)-thiazole: step 1/1. Its function is as follows. Condenses 4-methyl-5-(beta-hydroxyethyl)thiazole monophosphate (THZ-P) and 2-methyl-4-amino-5-hydroxymethyl pyrimidine pyrophosphate (HMP-PP) to form thiamine monophosphate (TMP). In Xanthobacter autotrophicus (strain ATCC BAA-1158 / Py2), this protein is Thiamine-phosphate synthase.